A 371-amino-acid polypeptide reads, in one-letter code: N-acetyldiaminopimelate deacetylase (371 aa).

Aspartate 68 is an active-site residue. The Proton acceptor role is filled by glutamate 127.

The protein belongs to the peptidase M20A family. N-acetyldiaminopimelate deacetylase subfamily.

The enzyme catalyses N-acetyl-(2S,6S)-2,6-diaminopimelate + H2O = (2S,6S)-2,6-diaminopimelate + acetate. Its pathway is amino-acid biosynthesis; L-lysine biosynthesis via DAP pathway; LL-2,6-diaminopimelate from (S)-tetrahydrodipicolinate (acetylase route): step 3/3. In terms of biological role, catalyzes the conversion of N-acetyl-diaminopimelate to diaminopimelate and acetate. This chain is N-acetyldiaminopimelate deacetylase, found in Oceanobacillus iheyensis (strain DSM 14371 / CIP 107618 / JCM 11309 / KCTC 3954 / HTE831).